The chain runs to 247 residues: UPF0259 membrane protein BUAPTUC7_273 (247 aa).

The next 6 membrane-spanning stretches (helical) occupy residues 20 to 40, 85 to 105, 114 to 134, 137 to 157, 188 to 208, and 218 to 238; these read IGAI…IDMF, IMES…LISF, IVSS…LNFL, FIIQ…SIIL, IIGP…MLLA, and LFLI…IYLF.

Belongs to the UPF0259 family.

Its subcellular location is the cell membrane. This chain is UPF0259 membrane protein BUAPTUC7_273, found in Buchnera aphidicola subsp. Acyrthosiphon pisum (strain Tuc7).